Here is a 21-residue protein sequence, read N- to C-terminus: Fibrinogen beta chain (21 aa).

Gln-1 is modified (pyrrolidone carboxylic acid). Residues Gln-1 to Glu-11 show a composition bias toward acidic residues. The tract at residues Gln-1–Arg-21 is disordered. Thr-4 carries O-linked (GalNAc...) threonine glycosylation. Tyr-6 carries the post-translational modification Sulfotyrosine. Over residues Asp-12–Arg-21 the composition is skewed to basic and acidic residues.

As to quaternary structure, heterohexamer; disulfide linked. Contains 2 sets of 3 non-identical chains (alpha, beta and gamma). The 2 heterotrimers are in head to head conformation with the N-termini in a small central domain. Post-translationally, conversion of fibrinogen to fibrin is triggered by thrombin, which cleaves fibrinopeptides A and B from alpha and beta chains, and thus exposes the N-terminal polymerization sites responsible for the formation of the soft clot.

It is found in the secreted. Its function is as follows. Cleaved by the protease thrombin to yield monomers which, together with fibrinogen alpha (FGA) and fibrinogen gamma (FGG), polymerize to form an insoluble fibrin matrix. Fibrin has a major function in hemostasis as one of the primary components of blood clots. In addition, functions during the early stages of wound repair to stabilize the lesion and guide cell migration during re-epithelialization. Was originally thought to be essential for platelet aggregation, based on in vitro studies using anticoagulated blood. However subsequent studies have shown that it is not absolutely required for thrombus formation in vivo. Enhances expression of SELP in activated platelets. Maternal fibrinogen is essential for successful pregnancy. Fibrin deposition is also associated with infection, where it protects against IFNG-mediated hemorrhage. May also facilitate the antibacterial immune response via both innate and T-cell mediated pathways. The chain is Fibrinogen beta chain (FGB) from Cervus elaphus (Red deer).